A 235-amino-acid polypeptide reads, in one-letter code: Large ribosomal subunit protein uL2 (235 aa).

Residues 197–218 (VAMNPVDHPHGGGEGKTSGGRH) are disordered.

It belongs to the universal ribosomal protein uL2 family. In terms of assembly, part of the 50S ribosomal subunit. Forms a bridge to the 30S subunit in the 70S ribosome.

One of the primary rRNA binding proteins. Required for association of the 30S and 50S subunits to form the 70S ribosome, for tRNA binding and peptide bond formation. It has been suggested to have peptidyltransferase activity; this is somewhat controversial. Makes several contacts with the 16S rRNA in the 70S ribosome. The sequence is that of Large ribosomal subunit protein uL2 (rplB) from Carsonella ruddii (strain PV).